The chain runs to 84 residues: Putative membrane protein insertion efficiency factor (84 aa).

Belongs to the UPF0161 family.

Its subcellular location is the cell inner membrane. Its function is as follows. Could be involved in insertion of integral membrane proteins into the membrane. This Shewanella loihica (strain ATCC BAA-1088 / PV-4) protein is Putative membrane protein insertion efficiency factor.